The following is a 155-amino-acid chain: Endoribonuclease YbeY (155 aa).

The Zn(2+) site is built by His120, His124, and His130.

The protein belongs to the endoribonuclease YbeY family. Requires Zn(2+) as cofactor.

It is found in the cytoplasm. Single strand-specific metallo-endoribonuclease involved in late-stage 70S ribosome quality control and in maturation of the 3' terminus of the 16S rRNA. In Staphylococcus aureus (strain MSSA476), this protein is Endoribonuclease YbeY.